We begin with the raw amino-acid sequence, 701 residues long: CRS2-associated factor 1, chloroplastic (701 aa).

A chloroplast-targeting transit peptide spans 1-37 (MSLKLNTPFPIFAPSLFPNHNPRAPSEIRFSRWGNAN). Disordered stretches follow at residues 68–136 (VHTH…PEVK) and 191–221 (LPQS…QKPG). 2 CRM domains span residues 241–337 (EPLT…TRPR) and 359–455 (EGLT…LTTP). The interval 471 to 532 (LPEDDEPSVS…SLQSWSTKDV (62 aa)) is disordered. 2 stretches are compositionally biased toward polar residues: residues 479–492 (VSPN…QNPP) and 520–530 (TINSLQSWSTK). A CRS2 binding region spans residues 564–586 (RVLILMKQAVESGTALVLDAADL).

In terms of assembly, interacts with CRS2 and RNA. Part of large ribonucleo-protein complexes that include group IIB introns, CRS2 and CAF1.

It is found in the plastid. The protein resides in the chloroplast stroma. In terms of biological role, required for the splicing of group IIB introns in chloroplasts. Forms splicing particles with CRS2. Interacts with RNA and confers intron specificity of the splicing particles. This is CRS2-associated factor 1, chloroplastic from Arabidopsis thaliana (Mouse-ear cress).